A 208-amino-acid polypeptide reads, in one-letter code: MTKGILGKKVGMTQIFTEAGEFIPVTVIEATPNVVLQVKTVETDGYEAVQVGFDDKREVLSNKPAKGHVAKANTAPKRFIREFKNIEGLEVGSEITVDIFEAGDIVDVTGTSKGKGFQGVIKRHGQSRGPMAHGSRYHRRPGSMGPVAPNRVFKNKHLAGRMGGNRVTIQNLEIVQVIPEKNVILIKGNVPGAKKSLITIKSAVKTAK.

A disordered region spans residues 124-146 (HGQSRGPMAHGSRYHRRPGSMGP).

Belongs to the universal ribosomal protein uL3 family. In terms of assembly, part of the 50S ribosomal subunit. Forms a cluster with proteins L14 and L19.

Its function is as follows. One of the primary rRNA binding proteins, it binds directly near the 3'-end of the 23S rRNA, where it nucleates assembly of the 50S subunit. This chain is Large ribosomal subunit protein uL3, found in Streptococcus thermophilus (strain ATCC BAA-491 / LMD-9).